A 478-amino-acid chain; its full sequence is Bifunctional protein HldE (478 aa).

Residues 1–318 (MKVTLPDFRQ…ENAIRGRADT (318 aa)) form a ribokinase region. Residue 195-198 (NLSE) coordinates ATP. The active site involves Asp264. The interval 344–478 (MTNGCFDILH…NTIKANASKS (135 aa)) is cytidylyltransferase.

In the N-terminal section; belongs to the carbohydrate kinase PfkB family. This sequence in the C-terminal section; belongs to the cytidylyltransferase family. As to quaternary structure, homodimer.

It carries out the reaction D-glycero-beta-D-manno-heptose 7-phosphate + ATP = D-glycero-beta-D-manno-heptose 1,7-bisphosphate + ADP + H(+). It catalyses the reaction D-glycero-beta-D-manno-heptose 1-phosphate + ATP + H(+) = ADP-D-glycero-beta-D-manno-heptose + diphosphate. Its pathway is nucleotide-sugar biosynthesis; ADP-L-glycero-beta-D-manno-heptose biosynthesis; ADP-L-glycero-beta-D-manno-heptose from D-glycero-beta-D-manno-heptose 7-phosphate: step 1/4. The protein operates within nucleotide-sugar biosynthesis; ADP-L-glycero-beta-D-manno-heptose biosynthesis; ADP-L-glycero-beta-D-manno-heptose from D-glycero-beta-D-manno-heptose 7-phosphate: step 3/4. In terms of biological role, catalyzes the phosphorylation of D-glycero-D-manno-heptose 7-phosphate at the C-1 position to selectively form D-glycero-beta-D-manno-heptose-1,7-bisphosphate. Catalyzes the ADP transfer from ATP to D-glycero-beta-D-manno-heptose 1-phosphate, yielding ADP-D-glycero-beta-D-manno-heptose. This Pectobacterium carotovorum subsp. carotovorum (strain PC1) protein is Bifunctional protein HldE.